We begin with the raw amino-acid sequence, 265 residues long: Putative 2-aminoethylphosphonate transport system permease protein PhnV (265 aa).

Transmembrane regions (helical) follow at residues 13–33, 69–89, 104–124, 131–151, 185–205, and 233–253; these read GVVA…VILM, LTIG…AALA, VFYL…LVAF, MNGT…AFTF, LPLL…LSMG, and NIAD…LLMM. Positions 65–253 constitute an ABC transmembrane type-1 domain; sequence LLASLTIGFC…LVAITLLLMM (189 aa).

The protein belongs to the binding-protein-dependent transport system permease family.

The protein resides in the cell inner membrane. Functionally, probably part of the PhnSTUV complex (TC 3.A.1.11.5) involved in 2-aminoethylphosphonate import. Probably responsible for the translocation of the substrate across the membrane. The polypeptide is Putative 2-aminoethylphosphonate transport system permease protein PhnV (phnV) (Salmonella choleraesuis (strain SC-B67)).